Consider the following 220-residue polypeptide: Large ribosomal subunit protein uL3 (220 aa).

The tract at residues 145–169 is disordered; it reads GPASHGSKFHRRPGSSGNRTWPGRV.

It belongs to the universal ribosomal protein uL3 family. Part of the 50S ribosomal subunit. Forms a cluster with proteins L14 and L19.

Its function is as follows. One of the primary rRNA binding proteins, it binds directly near the 3'-end of the 23S rRNA, where it nucleates assembly of the 50S subunit. In Bdellovibrio bacteriovorus (strain ATCC 15356 / DSM 50701 / NCIMB 9529 / HD100), this protein is Large ribosomal subunit protein uL3.